We begin with the raw amino-acid sequence, 293 residues long: Lipoyl synthase (293 aa).

Residues Cys38, Cys43, Cys49, Cys64, Cys68, Cys71, and Ser277 each coordinate [4Fe-4S] cluster. The region spanning 50–266 (WSRGTATFLL…STIAKNAGIR (217 aa)) is the Radical SAM core domain.

It belongs to the radical SAM superfamily. Lipoyl synthase family. [4Fe-4S] cluster serves as cofactor.

The protein resides in the cytoplasm. The catalysed reaction is [[Fe-S] cluster scaffold protein carrying a second [4Fe-4S](2+) cluster] + N(6)-octanoyl-L-lysyl-[protein] + 2 oxidized [2Fe-2S]-[ferredoxin] + 2 S-adenosyl-L-methionine + 4 H(+) = [[Fe-S] cluster scaffold protein] + N(6)-[(R)-dihydrolipoyl]-L-lysyl-[protein] + 4 Fe(3+) + 2 hydrogen sulfide + 2 5'-deoxyadenosine + 2 L-methionine + 2 reduced [2Fe-2S]-[ferredoxin]. It functions in the pathway protein modification; protein lipoylation via endogenous pathway; protein N(6)-(lipoyl)lysine from octanoyl-[acyl-carrier-protein]: step 2/2. Its function is as follows. Catalyzes the radical-mediated insertion of two sulfur atoms into the C-6 and C-8 positions of the octanoyl moiety bound to the lipoyl domains of lipoate-dependent enzymes, thereby converting the octanoylated domains into lipoylated derivatives. The polypeptide is Lipoyl synthase (Chlorobium chlorochromatii (strain CaD3)).